Consider the following 99-residue polypeptide: Goannatyrotoxin-Vere1 (99 aa).

The first 28 residues, 1–28 (MIASMKPWPLVMVAALCILFCLGTLVDA), serve as a signal peptide directing secretion. Position 64 is a tyrosine amide (tyrosine 64). Residues 68-99 (SSPETLMSELIFGENSNSDHSSRSRFDDSYMW) constitute a propeptide, C-terminal extension.

It belongs to the NPY family. In terms of tissue distribution, expressed by the mandibular venom gland.

The protein resides in the secreted. In terms of biological role, shows a potent unique triphasic action, rapid biphasic hypertension followed by prolonged hypotension. The chain is Goannatyrotoxin-Vere1 from Varanus eremius (Rusty desert monitor).